Consider the following 410-residue polypeptide: LIMR family protein SELMODRAFT_432208 (410 aa).

Transmembrane regions (helical) follow at residues 30–50, 67–87, 129–149, 156–176, and 179–199; these read LWWA…IFFY, LWVV…YAVI, VTLM…LTTL, ICLD…NTII, and ILFM…LIFA. A coiled-coil region spans residues 245-274; it reads RMFRKNVKKVQQELVFLEDDVEALNEAFPQ. Helical transmembrane passes span 288 to 308 and 330 to 350; these read LVFG…IIVF and GGLL…MSVI. Positions 389-400 are enriched in low complexity; that stretch reads PSSAMDSSSWSA. Residues 389 to 410 form a disordered region; it reads PSSAMDSSSWSADRPCRPWPWP.

It belongs to the LIMR family.

The protein localises to the membrane. The chain is LIMR family protein SELMODRAFT_432208 from Selaginella moellendorffii (Spikemoss).